The chain runs to 402 residues: Nicotinate phosphoribosyltransferase (402 aa).

His224 carries the post-translational modification Phosphohistidine; by autocatalysis.

This sequence belongs to the NAPRTase family. Transiently phosphorylated on a His residue during the reaction cycle. Phosphorylation strongly increases the affinity for substrates and increases the rate of nicotinate D-ribonucleotide production. Dephosphorylation regenerates the low-affinity form of the enzyme, leading to product release.

The enzyme catalyses nicotinate + 5-phospho-alpha-D-ribose 1-diphosphate + ATP + H2O = nicotinate beta-D-ribonucleotide + ADP + phosphate + diphosphate. The protein operates within cofactor biosynthesis; NAD(+) biosynthesis; nicotinate D-ribonucleotide from nicotinate: step 1/1. Catalyzes the synthesis of beta-nicotinate D-ribonucleotide from nicotinate and 5-phospho-D-ribose 1-phosphate at the expense of ATP. The sequence is that of Nicotinate phosphoribosyltransferase from Neisseria meningitidis serogroup A / serotype 4A (strain DSM 15465 / Z2491).